Consider the following 217-residue polypeptide: Adenylate kinase (217 aa).

10–15 is a binding site for ATP; it reads GAGKGT. An NMP region spans residues 30 to 59; it reads STGDMLRAAVKAGTPLGVEAKKVMDAGGLV. AMP contacts are provided by residues Thr-31, Arg-36, 57-59, 85-88, and Gln-92; these read GLV and GFPR. Residues 122-159 are LID; that stretch reads GRRAHLASGRTYHVKYNPPKVAGKDDLTGEDLVQRDDD. ATP contacts are provided by residues Arg-123 and 132-133; that span reads TY. AMP is bound by residues Arg-156 and Arg-167. Gly-203 lines the ATP pocket.

It belongs to the adenylate kinase family. As to quaternary structure, monomer.

It localises to the cytoplasm. It catalyses the reaction AMP + ATP = 2 ADP. It participates in purine metabolism; AMP biosynthesis via salvage pathway; AMP from ADP: step 1/1. In terms of biological role, catalyzes the reversible transfer of the terminal phosphate group between ATP and AMP. Plays an important role in cellular energy homeostasis and in adenine nucleotide metabolism. In Aromatoleum aromaticum (strain DSM 19018 / LMG 30748 / EbN1) (Azoarcus sp. (strain EbN1)), this protein is Adenylate kinase.